The chain runs to 549 residues: Biotin-dependent acetyl-/propionyl-coenzyme A carboxylase beta5 subunit (549 aa).

Positions T25–S281 constitute a CoA carboxyltransferase N-terminal domain. The region spanning A295 to K542 is the CoA carboxyltransferase C-terminal domain.

The protein belongs to the AccD/PCCB family. The biotin-dependent acyl-CoA carboxylase complex is composed of AccA3, which contains the biotin carboxylase (BC) and biotin carboxyl carrier protein (BCCP) domains, and AccD5, which contains the carboxyl transferase (CT) domain.

The enzyme catalyses N(6)-carboxybiotinyl-L-lysyl-[protein] + acetyl-CoA = N(6)-biotinyl-L-lysyl-[protein] + malonyl-CoA. It catalyses the reaction N(6)-carboxybiotinyl-L-lysyl-[protein] + propanoyl-CoA = methylmalonyl-CoA + N(6)-biotinyl-L-lysyl-[protein]. It participates in lipid metabolism; mycolic acid biosynthesis. Component of a biotin-dependent acyl-CoA carboxylase complex. This subunit transfers the CO2 from carboxybiotin to the CoA ester substrate. When associated with the alpha3 subunit AccA3, is involved in the carboxylation of acetyl-CoA and propionyl-CoA. The chain is Biotin-dependent acetyl-/propionyl-coenzyme A carboxylase beta5 subunit (accD5) from Mycobacterium leprae (strain TN).